We begin with the raw amino-acid sequence, 251 residues long: Imidazole glycerol phosphate synthase subunit HisF (251 aa).

Active-site residues include Asp-11 and Asp-130.

It belongs to the HisA/HisF family. In terms of assembly, heterodimer of HisH and HisF.

It is found in the cytoplasm. The catalysed reaction is 5-[(5-phospho-1-deoxy-D-ribulos-1-ylimino)methylamino]-1-(5-phospho-beta-D-ribosyl)imidazole-4-carboxamide + L-glutamine = D-erythro-1-(imidazol-4-yl)glycerol 3-phosphate + 5-amino-1-(5-phospho-beta-D-ribosyl)imidazole-4-carboxamide + L-glutamate + H(+). It functions in the pathway amino-acid biosynthesis; L-histidine biosynthesis; L-histidine from 5-phospho-alpha-D-ribose 1-diphosphate: step 5/9. In terms of biological role, IGPS catalyzes the conversion of PRFAR and glutamine to IGP, AICAR and glutamate. The HisF subunit catalyzes the cyclization activity that produces IGP and AICAR from PRFAR using the ammonia provided by the HisH subunit. This chain is Imidazole glycerol phosphate synthase subunit HisF, found in Cytophaga hutchinsonii (strain ATCC 33406 / DSM 1761 / CIP 103989 / NBRC 15051 / NCIMB 9469 / D465).